The primary structure comprises 435 residues: Glutamate-1-semialdehyde 2,1-aminomutase (435 aa).

Lys266 carries the post-translational modification N6-(pyridoxal phosphate)lysine.

This sequence belongs to the class-III pyridoxal-phosphate-dependent aminotransferase family. HemL subfamily. In terms of assembly, homodimer. Pyridoxal 5'-phosphate serves as cofactor.

It localises to the cytoplasm. It carries out the reaction (S)-4-amino-5-oxopentanoate = 5-aminolevulinate. It functions in the pathway porphyrin-containing compound metabolism; protoporphyrin-IX biosynthesis; 5-aminolevulinate from L-glutamyl-tRNA(Glu): step 2/2. The sequence is that of Glutamate-1-semialdehyde 2,1-aminomutase from Coxiella burnetii (strain RSA 331 / Henzerling II).